Reading from the N-terminus, the 602-residue chain is Elongation factor 4 (602 aa).

The tr-type G domain maps to 6-188; sequence DHIRNFSIVA…AIVNKLPAPK (183 aa). GTP-binding positions include 18-23 and 135-138; these read DHGKST and NKID.

This sequence belongs to the TRAFAC class translation factor GTPase superfamily. Classic translation factor GTPase family. LepA subfamily.

The protein resides in the cell inner membrane. It carries out the reaction GTP + H2O = GDP + phosphate + H(+). Functionally, required for accurate and efficient protein synthesis under certain stress conditions. May act as a fidelity factor of the translation reaction, by catalyzing a one-codon backward translocation of tRNAs on improperly translocated ribosomes. Back-translocation proceeds from a post-translocation (POST) complex to a pre-translocation (PRE) complex, thus giving elongation factor G a second chance to translocate the tRNAs correctly. Binds to ribosomes in a GTP-dependent manner. In Brucella suis (strain ATCC 23445 / NCTC 10510), this protein is Elongation factor 4.